Consider the following 364-residue polypeptide: tRNA 2-selenouridine synthase (364 aa).

In terms of domain architecture, Rhodanese spans Leu14–Trp137. Residue Cys97 is the S-selanylcysteine intermediate of the active site.

It belongs to the SelU family. In terms of assembly, monomer.

It catalyses the reaction 5-methylaminomethyl-2-thiouridine(34) in tRNA + selenophosphate + (2E)-geranyl diphosphate + H2O + H(+) = 5-methylaminomethyl-2-selenouridine(34) in tRNA + (2E)-thiogeraniol + phosphate + diphosphate. The enzyme catalyses 5-methylaminomethyl-2-thiouridine(34) in tRNA + (2E)-geranyl diphosphate = 5-methylaminomethyl-S-(2E)-geranyl-thiouridine(34) in tRNA + diphosphate. The catalysed reaction is 5-methylaminomethyl-S-(2E)-geranyl-thiouridine(34) in tRNA + selenophosphate + H(+) = 5-methylaminomethyl-2-(Se-phospho)selenouridine(34) in tRNA + (2E)-thiogeraniol. It carries out the reaction 5-methylaminomethyl-2-(Se-phospho)selenouridine(34) in tRNA + H2O = 5-methylaminomethyl-2-selenouridine(34) in tRNA + phosphate. Its function is as follows. Involved in the post-transcriptional modification of the uridine at the wobble position (U34) of tRNA(Lys), tRNA(Glu) and tRNA(Gln). Catalyzes the conversion of 2-thiouridine (S2U-RNA) to 2-selenouridine (Se2U-RNA). Acts in a two-step process involving geranylation of 2-thiouridine (S2U) to S-geranyl-2-thiouridine (geS2U) and subsequent selenation of the latter derivative to 2-selenouridine (Se2U) in the tRNA chain. The protein is tRNA 2-selenouridine synthase of Salmonella enteritidis PT4 (strain P125109).